Reading from the N-terminus, the 421-residue chain is UDP-N-acetylglucosamine 1-carboxyvinyltransferase (421 aa).

22–23 is a binding site for phosphoenolpyruvate; the sequence is KN. Arginine 93 is a UDP-N-acetyl-alpha-D-glucosamine binding site. Catalysis depends on cysteine 117, which acts as the Proton donor. Cysteine 117 is modified (2-(S-cysteinyl)pyruvic acid O-phosphothioketal). UDP-N-acetyl-alpha-D-glucosamine is bound by residues 122–126, aspartate 308, and isoleucine 330; that span reads RPVDL.

The protein belongs to the EPSP synthase family. MurA subfamily.

Its subcellular location is the cytoplasm. It catalyses the reaction phosphoenolpyruvate + UDP-N-acetyl-alpha-D-glucosamine = UDP-N-acetyl-3-O-(1-carboxyvinyl)-alpha-D-glucosamine + phosphate. Its pathway is cell wall biogenesis; peptidoglycan biosynthesis. Cell wall formation. Adds enolpyruvyl to UDP-N-acetylglucosamine. In Pseudomonas fluorescens (strain Pf0-1), this protein is UDP-N-acetylglucosamine 1-carboxyvinyltransferase.